A 31-amino-acid chain; its full sequence is Delta-conotoxin-like ErVIA (31 aa).

The propeptide occupies 1 to 4 (LNKR). 3 cysteine pairs are disulfide-bonded: C5–C21, C12–C25, and C20–C29.

It belongs to the conotoxin O1 superfamily. In terms of tissue distribution, expressed by the venom duct.

It is found in the secreted. This toxin activates voltage-gated sodium channels. It shifts the voltage-dependence of activation to more hyperpolarized potentials but has only little effect on channel inactivation. It is active on Nav1.3/SCN3A (EC(50)=3.98 nM), Nav1.4/SCN4A (EC(50)=4.99 nM), Nav1.6/SCN8A (EC(50)=1.27 nM) and Nav1.7/SCN9A (EC(50)=2.42 nM) voltage-gated sodium channels. In vivo, it induces nocifensive or pain-like behaviors in mice when injected intraplantarly. The protein is Delta-conotoxin-like ErVIA of Conus eburneus (Ivory cone).